The sequence spans 895 residues: Catenin alpha-3 (895 aa).

Positions 74–107 (EMIAKEATVLKEELAAALQEVRKESKALKVSAER) form a coiled coil. At serine 160 the chain carries Phosphoserine. A coiled-coil region spans residues 325–379 (RERIIAECNAIRQALQDLLTEYMSNTGKTERSNTLNTAIVNMSKKTRDLRRQLRK). Residue threonine 361 is modified to Phosphothreonine. The disordered stretch occupies residues 635 to 660 (DVSDLEDDHEVRSHTSIQTEGKTDRA). Phosphoserine occurs at positions 637 and 647. Threonine 649 carries the post-translational modification Phosphothreonine.

Belongs to the vinculin/alpha-catenin family. In terms of assembly, interacts with CTNNB1. Interacts with PKP2. Expressed in heart (at protein level).

The protein localises to the cytoplasm. It localises to the cytoskeleton. Its subcellular location is the cell junction. It is found in the desmosome. May be involved in formation of stretch-resistant cell-cell adhesion complexes. The polypeptide is Catenin alpha-3 (Mus musculus (Mouse)).